The chain runs to 489 residues: Hyaluronoglucuronidase (489 aa).

Residue Glu176 is the Proton donor of the active site. Glu290 acts as the Nucleophile in catalysis.

It belongs to the glycosyl hydrolase 79 family.

The catalysed reaction is Random hydrolysis of (1-&gt;3)-linkages between beta-D-glucuronate and N-acetyl-D-glucosamine residues in hyaluronate.. Its activity is regulated as follows. Hyaluronidase activity is inhibited by Mn(2+), Cu(2+) and Fe(3+). Hyaluronidase that mediates hydrolysis of (1-&gt;3)-linkages between beta-D-glucuronate and N-acetyl-D-glucosamine residues in hyaluronate. Very specific to hyaluronate: not able to hydrolyze chitin, heparin or chondroitin sulfate. This Hirudo nipponia (Korean blood-sucking leech) protein is Hyaluronoglucuronidase.